We begin with the raw amino-acid sequence, 974 residues long: UvrABC system protein A (974 aa).

Glycine 34 to serine 41 contacts ATP. 2 ABC transporter domains span residues tryptophan 331–leucine 610 and isoleucine 630–lysine 959. Glycine 663 to serine 670 contributes to the ATP binding site. The segment at cysteine 762–cysteine 788 adopts a C4-type zinc-finger fold.

The protein belongs to the ABC transporter superfamily. UvrA family. In terms of assembly, forms a heterotetramer with UvrB during the search for lesions.

It localises to the cytoplasm. Functionally, the UvrABC repair system catalyzes the recognition and processing of DNA lesions. UvrA is an ATPase and a DNA-binding protein. A damage recognition complex composed of 2 UvrA and 2 UvrB subunits scans DNA for abnormalities. When the presence of a lesion has been verified by UvrB, the UvrA molecules dissociate. The sequence is that of UvrABC system protein A from Brucella suis biovar 1 (strain 1330).